Reading from the N-terminus, the 207-residue chain is Nucleoplasmin-2 (207 aa).

Residues 1–15 (MSRHSTSSVTETTAK) are compositionally biased toward polar residues. Disordered stretches follow at residues 1 to 20 (MSRH…MLWG) and 121 to 207 (DLTW…VTKK). The span at 123–147 (TWEDDEEEEEEEEEEDEDEDADISL) shows a compositional bias: acidic residues. Residues 129–152 (EEEEEEEEEDEDEDADISLEEIPV) are acidic tract A2. Residues 165–180 (SIAKKKKVEKEEDETV) carry the Bipartite nuclear localization signal motif. Residues 198 to 207 (PRAKKPVTKK) are compositionally biased toward basic residues.

It belongs to the nucleoplasmin family. Homopentamer, when bound to H2A-H2B dimers only. Homodecamer of two stacked pentamers, when bound to H2A-H2B dimers and H3-H4 tetramers simultaneously. Ovary specific.

The protein resides in the nucleus. Its function is as follows. Core histones chaperone involved in chromatin reprogramming, specially during fertilization and early embryonic development. Probably involved in sperm DNA decondensation during fertilization. In Mus musculus (Mouse), this protein is Nucleoplasmin-2 (Npm2).